Consider the following 77-residue polypeptide: Small ribosomal subunit protein bS20 (77 aa).

This sequence belongs to the bacterial ribosomal protein bS20 family.

Binds directly to 16S ribosomal RNA. This Streptococcus uberis (strain ATCC BAA-854 / 0140J) protein is Small ribosomal subunit protein bS20.